Reading from the N-terminus, the 220-residue chain is Adenylate kinase (220 aa).

Residue 13 to 18 (GAGKGT) coordinates ATP. The segment at 33–62 (STGDILRAAVKEGTPLGLEAQSYMNRGALV) is NMP. Residues Thr34, Arg39, 60–62 (ALV), 88–91 (GFPR), and Gln95 contribute to the AMP site. Residues 129-170 (GRRTCPLCKRIFHVRFNPPPAAPPFCTDHTDCPSELVQRPDD) are LID. Position 130 (Arg130) interacts with ATP. The Zn(2+) site is built by Cys133 and Cys136. Residue 139 to 140 (IF) participates in ATP binding. 2 residues coordinate Zn(2+): Asp156 and Cys160. Arg167 and Arg178 together coordinate AMP. Arg206 serves as a coordination point for ATP.

It belongs to the adenylate kinase family. In terms of assembly, monomer.

Its subcellular location is the cytoplasm. It carries out the reaction AMP + ATP = 2 ADP. Its pathway is purine metabolism; AMP biosynthesis via salvage pathway; AMP from ADP: step 1/1. Catalyzes the reversible transfer of the terminal phosphate group between ATP and AMP. Plays an important role in cellular energy homeostasis and in adenine nucleotide metabolism. This chain is Adenylate kinase, found in Gloeobacter violaceus (strain ATCC 29082 / PCC 7421).